Consider the following 487-residue polypeptide: Cytochrome c-552 (487 aa).

Residues 1-27 (MSKKWTRNTAAMAAILSALCLSTNALA) form the signal peptide. Residue His104 coordinates heme c. Residues Cys132, Cys135, and Lys136 each contribute to the heme site. 6 residues coordinate heme c: Cys170, Cys173, His174, Cys219, Cys222, and His223. Residues Glu225, Tyr226, Lys271, and Gln273 each coordinate Ca(2+). A substrate-binding site is contributed by Tyr226. A substrate-binding site is contributed by His274. The heme c site is built by His285, Cys292, Cys295, His296, His311, Cys324, Cys327, His328, and His403.

This sequence belongs to the cytochrome c-552 family. Requires Ca(2+) as cofactor. It depends on heme c as a cofactor.

It is found in the periplasm. It catalyses the reaction 6 Fe(III)-[cytochrome c] + NH4(+) + 2 H2O = 6 Fe(II)-[cytochrome c] + nitrite + 8 H(+). It functions in the pathway nitrogen metabolism; nitrate reduction (assimilation). In terms of biological role, catalyzes the reduction of nitrite to ammonia, consuming six electrons in the process. In Photobacterium profundum (strain SS9), this protein is Cytochrome c-552.